The primary structure comprises 117 residues: Large ribosomal subunit protein uL18 (117 aa).

This sequence belongs to the universal ribosomal protein uL18 family. Part of the 50S ribosomal subunit; part of the 5S rRNA/L5/L18/L25 subcomplex. Contacts the 5S and 23S rRNAs.

This is one of the proteins that bind and probably mediate the attachment of the 5S RNA into the large ribosomal subunit, where it forms part of the central protuberance. This is Large ribosomal subunit protein uL18 from Vibrio campbellii (strain ATCC BAA-1116).